The following is a 222-amino-acid chain: MKNNAQLLMPREKMLKFGISALTDVELLALFLRTGTRGKDVLTLAKEMLENFGSLYGLLTSEYEQFSGVHGIGVAKFAQLKGIAELARRYYNVRMREESPLLSPEMTREFLQSQLTGEEREIFMVIFLDSQHRVITHSRIFSGTLNHVEVHPREIIREAIKINASALILAHNHPSGCAEPSKADKLITERIIKSCQFMDLRVLDHIVIGRGEYVSFAERGWI.

Residues 100 to 222 (PLLSPEMTRE…YVSFAERGWI (123 aa)) enclose the MPN domain. Zn(2+) contacts are provided by His171, His173, and Asp184. The JAMM motif motif lies at 171–184 (HNHPSGCAEPSKAD).

This sequence belongs to the UPF0758 family. YicR subfamily.

This is UPF0758 protein YicR from Shigella dysenteriae serotype 1 (strain Sd197).